Consider the following 72-residue polypeptide: Translation initiation factor IF-1 (72 aa).

Residues 1 to 72 (MSKDDVIQMQ…SRARIVFRAK (72 aa)) enclose the S1-like domain.

This sequence belongs to the IF-1 family. Component of the 30S ribosomal translation pre-initiation complex which assembles on the 30S ribosome in the order IF-2 and IF-3, IF-1 and N-formylmethionyl-tRNA(fMet); mRNA recruitment can occur at any time during PIC assembly.

It localises to the cytoplasm. Functionally, one of the essential components for the initiation of protein synthesis. Stabilizes the binding of IF-2 and IF-3 on the 30S subunit to which N-formylmethionyl-tRNA(fMet) subsequently binds. Helps modulate mRNA selection, yielding the 30S pre-initiation complex (PIC). Upon addition of the 50S ribosomal subunit IF-1, IF-2 and IF-3 are released leaving the mature 70S translation initiation complex. The chain is Translation initiation factor IF-1 from Albidiferax ferrireducens (strain ATCC BAA-621 / DSM 15236 / T118) (Rhodoferax ferrireducens).